The sequence spans 49 residues: Disintegrin ocellatin (49 aa).

Positions 1-47 (DCESGPCCDNCKFLKEGTICKMARGDNMHHYCNGKTCDCPRNPYKGE) constitute a Disintegrin domain. 4 disulfide bridges follow: Cys2/Cys11, Cys7/Cys32, Cys8/Cys37, and Cys20/Cys39. A Cell attachment site motif is present at residues 24 to 26 (RGD).

Belongs to the venom metalloproteinase (M12B) family. P-II subfamily. P-IIa sub-subfamily. Monomer. Expressed by the venom gland.

Its subcellular location is the secreted. Its function is as follows. Inhibits ADP-induced human platelet aggregation. The polypeptide is Disintegrin ocellatin (Echis ocellatus (Ocellated saw-scaled viper)).